The sequence spans 520 residues: Keratin, type II cytoskeletal 4 (520 aa).

Positions 1 to 136 are head; the sequence is MIARQQCVRG…DPEIQKVRTE (136 aa). Position 13 is an omega-N-methylarginine (R13). Residues 137–172 are coil 1A; sequence EREQIKLLNNKFASFIDKVQFLEQQNKVLETKWNLL. One can recognise an IF rod domain in the interval 137–450; sequence EREQIKLLNN…KLLEGEEYRM (314 aa). Positions 173 to 191 are linker 1; it reads QQQTTTTSSKNLEPLFETY. A coil 1B region spans residues 192 to 284; the sequence is LSVLRKQLDT…LYDAELSQMQ (93 aa). Residues 285–307 are linker 12; that stretch reads THVSDTSVVLSMDNNRNLDLDSI. The interval 308 to 447 is coil 2; that stretch reads IAEVRAQYEE…TYRKLLEGEE (140 aa). Residues 448-520 form a tail region; that stretch reads YRMSGECQSA…ISTTTLNKRR (73 aa). The segment at 500–520 is disordered; it reads GSVSGSSSSKIISTTTLNKRR. The segment covering 503–514 has biased composition (low complexity); that stretch reads SGSSSSKIISTT.

Belongs to the intermediate filament family. In terms of assembly, heterotetramer of two type I and two type II keratins. Keratin-4 is generally associated with keratin-13. Detected in the suprabasal layer of the stratified epithelium of the esophagus, exocervix, vagina, mouth and lingual mucosa, and in cells and cell clusters in the mucosa and serous gland ducts of the esophageal submucosa (at protein level). Expressed widely in the exocervix and esophageal epithelium, with lowest levels detected in the basal cell layer.

This Homo sapiens (Human) protein is Keratin, type II cytoskeletal 4 (KRT4).